An 861-amino-acid chain; its full sequence is Actin-binding LIM protein 1 (861 aa).

LIM zinc-binding domains follow at residues 97 to 156 (IHCH…MYGT), 156 to 216 (TRCH…MSSS), 224 to 283 (SNCA…LFGV), and 283 to 343 (VKCE…TKTE). At Ser-216 the chain carries Phosphoserine. Residues 374–414 (LQLLSPPCLTNSNKNPRQPTRTSSESIYSRPGSSIPGSPGH) form a disordered region. Residues 381-400 (CLTNSNKNPRQPTRTSSESI) show a composition bias toward polar residues. The segment covering 404–413 (PGSSIPGSPG) has biased composition (low complexity). Position 411 is a phosphoserine (Ser-411). A phosphotyrosine mark is found at Tyr-417 and Tyr-440. Disordered regions lie at residues 459 to 590 (EDKQ…PTYA) and 634 to 682 (FPAA…ELLR). 3 positions are modified to phosphoserine: Ser-466, Ser-470, and Ser-475. Polar residues predominate over residues 467–478 (LGESPRTLSPTP). At Thr-477 the chain carries Phosphothreonine. Ser-479 is subject to Phosphoserine. Tyr-483 is modified (phosphotyrosine). Polar residues predominate over residues 493–518 (RSTSQGSINSPVYSRHSYTPTTSRSP). Phosphoserine occurs at positions 496, 499, and 502. A compositionally biased stretch (low complexity) spans 536–546 (PLRTSSFSSTH). Phosphoserine is present on residues Ser-582 and Ser-671. A coiled-coil region spans residues 673 to 723 (REEDEEELLRRRQLQEEQLMKLNSGLGQLILKEEMEKESRERASLASRYDS). A Glycyl lysine isopeptide (Lys-Gly) (interchain with G-Cter in SUMO2) cross-link involves residue Lys-704. The segment at 713–748 (ERASLASRYDSPLHSASHAPSSKTSSLPGYGKNGLH) is disordered. 4 positions are modified to phosphoserine: Ser-723, Ser-738, Ser-760, and Ser-789. A compositionally biased stretch (low complexity) spans 724–738 (PLHSASHAPSSKTSS). An HP domain is found at 793 to 861 (MLEPKIFPYE…NDMKKKAKLF (69 aa)).

In terms of assembly, binds F-actin. Interacts with ABRA. Isoform 1 is detected in adult retina, where it is highly expressed in the ganglion layer. Detected in rod inner segment. Isoform 2 is highly expressed in adult retina, brain, kidney and heart. Isoform 3 is highly expressed in adult retina, brain, kidney, liver, skeletal muscle, spleen and heart. Detected in embryonic retina, brain, spinal cord, peripheral sensory ganglia and thymus.

It localises to the cytoplasm. The protein resides in the cytoskeleton. May act as scaffold protein. May play a role in the development of the retina. Has been suggested to play a role in axon guidance. The polypeptide is Actin-binding LIM protein 1 (Ablim1) (Mus musculus (Mouse)).